A 137-amino-acid chain; its full sequence is Ribosome-binding factor A (137 aa).

It belongs to the RbfA family. Monomer. Binds 30S ribosomal subunits, but not 50S ribosomal subunits or 70S ribosomes.

Its subcellular location is the cytoplasm. Functionally, one of several proteins that assist in the late maturation steps of the functional core of the 30S ribosomal subunit. Associates with free 30S ribosomal subunits (but not with 30S subunits that are part of 70S ribosomes or polysomes). Required for efficient processing of 16S rRNA. May interact with the 5'-terminal helix region of 16S rRNA. This chain is Ribosome-binding factor A, found in Nitrobacter hamburgensis (strain DSM 10229 / NCIMB 13809 / X14).